The primary structure comprises 283 residues: MVSQFLHWYEYNKPVPYRSLLQEKIEPGQTLIVKGSTIDESQRFTINLHSKSADFSGNDVPLHISVRFDEGKVVMNTFANGEWGKEERKSLPIKKGDSFDIRIRAHDDRFQIVIDQKEFKDYEHRLPLTSITHLSIDGDLYLNHVHWGGKYYPVPYESGIASGFPIDKTLLIFGTVEKKAKRFNINLLRRNGDIALHFNPRFDEKAVIRNALAANEWGNEEREGKMPFEKGVGFDLAIKNEAYAFQIFVNGERFTSFAHRQDPNDISGLQIQGDIELTGIQIQ.

2 consecutive Galectin domains span residues 17 to 148 (YRSL…VHWG) and 156 to 283 (YESG…IQIQ). Residue 217-223 (WGNEERE) coordinates a beta-D-galactoside.

As to quaternary structure, (Microbial infection) Interacts (via domain galectin 2) with goat TMEM147. Interacts (via domain galectin 1) with goat TMEM63A.

It is found in the membrane. Its function is as follows. Binds galactose. Exerts immunomodulatory effects on host peripheral blood mononuclear cells to down-regulate host immune response. Hemagglutinates human, dog, rabbit, chicken and mouse erythrocytes but does not hemagglutinate the erythrocytes of goat, its natural host. This Haemonchus contortus (Barber pole worm) protein is 32 kDa beta-galactoside-binding lectin (GAL-1).